Reading from the N-terminus, the 137-residue chain is Basic phospholipase A2 homolog W6D49 (137 aa).

An N-terminal signal peptide occupies residues 1-16 (MRTLWILAVLLVSVDG). Intrachain disulfides connect cysteine 42–cysteine 131, cysteine 44–cysteine 60, cysteine 59–cysteine 111, cysteine 65–cysteine 137, cysteine 66–cysteine 104, cysteine 73–cysteine 97, and cysteine 91–cysteine 102. The segment at 121–133 (KKQQFNTGIFCSK) is important for membrane-damaging activities in eukaryotes and bacteria; heparin-binding.

Monomer. As to expression, expressed by the venom gland.

The protein resides in the secreted. Heparin reduces its edema-inducing activity. Functionally, snake venom phospholipase A2 homolog that lacks enzymatic activity. Shows myotoxin activities and displays edema-inducing activities. A model of myotoxic mechanism has been proposed: an apo Lys49-PLA2 is activated by the entrance of a hydrophobic molecule (e.g. fatty acid) at the hydrophobic channel of the protein leading to a reorientation of a monomer. This reorientation causes a transition between 'inactive' to 'active' states, causing alignment of C-terminal and membrane-docking sites (MDoS) side-by-side and putting the membrane-disruption sites (MDiS) in the same plane, exposed to solvent and in a symmetric position for both monomers. The MDoS region stabilizes the toxin on membrane by the interaction of charged residues with phospholipid head groups. Subsequently, the MDiS region destabilizes the membrane with penetration of hydrophobic residues. This insertion causes a disorganization of the membrane, allowing an uncontrolled influx of ions (i.e. calcium and sodium), and eventually triggering irreversible intracellular alterations and cell death. In Calloselasma rhodostoma (Malayan pit viper), this protein is Basic phospholipase A2 homolog W6D49.